The chain runs to 278 residues: Sulfur carrier protein FdhD (278 aa).

Cys121 serves as the catalytic Cysteine persulfide intermediate. 260–265 (FCKPGR) contacts Mo-bis(molybdopterin guanine dinucleotide).

Belongs to the FdhD family.

The protein resides in the cytoplasm. Required for formate dehydrogenase (FDH) activity. Acts as a sulfur carrier protein that transfers sulfur from IscS to the molybdenum cofactor prior to its insertion into FDH. In Salmonella newport (strain SL254), this protein is Sulfur carrier protein FdhD.